Consider the following 558-residue polypeptide: Hepatocyte nuclear factor 1-beta (558 aa).

The dimerization stretch occupies residues 1–31; it reads MVSKLTSLQQELLSALLSSGVTKEVLIQALE. An HNF-p1 domain is found at 1 to 32; sequence MVSKLTSLQQELLSALLSSGVTKEVLIQALEE. Residues serine 49, serine 52, serine 75, and serine 80 each carry the phosphoserine modification. The interval 66-85 is disordered; that stretch reads TNGHAKGRLSGDEGSEDGDD. In terms of domain architecture, POU-specific atypical spans 93–188; that stretch reads KELQALNTEE…ILRQFNQTVQ (96 aa). Residues 231 to 311 constitute a DNA-binding region (homeobox; HNF1-type); that stretch reads MRRNRFKWGP…NRRKEEAFRQ (81 aa). The tract at residues 323 to 348 is disordered; the sequence is THNLNPLLTHGSPHHQPSSSPPNKMS.

The protein belongs to the HNF1 homeobox family. Binds DNA as a dimer. Can form homodimer or heterodimer with HNF1-alpha. Interacts (via HNF-p1 domain) with PCBD1; the interaction increases its transactivation activity.

It is found in the nucleus. In terms of biological role, transcription factor that binds to the inverted palindrome 5'-GTTAATNATTAAC-3'. Binds to the FPC element in the cAMP regulatory unit of the PLAU gene. Transcriptional activity is increased by coactivator PCBD1. The sequence is that of Hepatocyte nuclear factor 1-beta (Hnf1b) from Mus musculus (Mouse).